The chain runs to 232 residues: Small ribosomal subunit protein uS3 (232 aa).

One can recognise a KH type-2 domain in the interval 39-107; the sequence is VRQFLTKELS…PAQINIAEVR (69 aa).

This sequence belongs to the universal ribosomal protein uS3 family. As to quaternary structure, part of the 30S ribosomal subunit. Forms a tight complex with proteins S10 and S14.

Binds the lower part of the 30S subunit head. Binds mRNA in the 70S ribosome, positioning it for translation. This is Small ribosomal subunit protein uS3 from Sodalis glossinidius (strain morsitans).